The sequence spans 253 residues: MSLRKVRSLPSLRVLAEVSNPLVRVPPPSFTYQTRQVHNTKKNEHSPMLSSDSHASFTRMSLKTLKNECRTRGLKVSGKKTELVERILLFEGSSSKKLHTSAIQRAKNDSSHIDSMKIPNVAKLEAEAESRKTDYIVKVPSIVNNAATEPKTKIEKDYEKKLQPADKKPLAENVGTVATPDADNVIQTPSVSDSIKVVNPEEELRSGSSEQGRSYSQQDEELTSRDKKFLLGFAGTVAAWWSLRFWKKEESKK.

The N-terminal 44 residues, 1 to 44 (MSLRKVRSLPSLRVLAEVSNPLVRVPPPSFTYQTRQVHNTKKNE), are a transit peptide targeting the mitochondrion. One can recognise an SAP domain in the interval 57-91 (FTRMSLKTLKNECRTRGLKVSGKKTELVERILLFE). The tract at residues 183–221 (DNVIQTPSVSDSIKVVNPEEELRSGSSEQGRSYSQQDEE) is disordered. Residues 206–217 (SGSSEQGRSYSQ) are compositionally biased toward polar residues. Residues 229 to 246 (FLLGFAGTVAAWWSLRFW) traverse the membrane as a helical segment.

It belongs to the AIM34 family.

It localises to the mitochondrion membrane. This chain is Altered inheritance of mitochondria protein 34, mitochondrial (AIM34), found in Kluyveromyces lactis (strain ATCC 8585 / CBS 2359 / DSM 70799 / NBRC 1267 / NRRL Y-1140 / WM37) (Yeast).